The chain runs to 892 residues: DNA mismatch repair protein MutS (892 aa).

Positions 663–684 are disordered; that stretch reads TNTSLREAAPTTTLSTSDQGQM. 696-703 is an ATP binding site; that stretch reads GPNASGKS.

This sequence belongs to the DNA mismatch repair MutS family.

Its function is as follows. This protein is involved in the repair of mismatches in DNA. It is possible that it carries out the mismatch recognition step. This protein has a weak ATPase activity. This Nostoc punctiforme (strain ATCC 29133 / PCC 73102) protein is DNA mismatch repair protein MutS.